Reading from the N-terminus, the 447-residue chain is Argininosuccinate synthase (447 aa).

ATP contacts are provided by residues 17 to 25 (AFSGGLDTS) and A43. Residue Y99 participates in L-citrulline binding. The ATP site is built by G129 and T131. Positions 131, 135, and 136 each coordinate L-aspartate. N135 lines the L-citrulline pocket. D136 serves as a coordination point for ATP. The L-citrulline site is built by R139 and S192. Position 194 (D194) interacts with ATP. L-citrulline-binding residues include T201, E203, and E280.

This sequence belongs to the argininosuccinate synthase family. Type 2 subfamily. As to quaternary structure, homotetramer.

It is found in the cytoplasm. The catalysed reaction is L-citrulline + L-aspartate + ATP = 2-(N(omega)-L-arginino)succinate + AMP + diphosphate + H(+). Its pathway is amino-acid biosynthesis; L-arginine biosynthesis; L-arginine from L-ornithine and carbamoyl phosphate: step 2/3. The protein is Argininosuccinate synthase of Escherichia coli O127:H6 (strain E2348/69 / EPEC).